Consider the following 334-residue polypeptide: Flavonol synthase/flavanone 3-hydroxylase (334 aa).

The Fe2OG dioxygenase domain occupies 196 to 295 (DLVYLMKINY…RMSWPVFLEP (100 aa)). Histidine 220, aspartate 222, and histidine 276 together coordinate Fe cation.

Belongs to the iron/ascorbate-dependent oxidoreductase family. Fe cation is required as a cofactor. L-ascorbate serves as cofactor.

Its subcellular location is the cytoplasm. It carries out the reaction a (2R,3R)-dihydroflavonol + 2-oxoglutarate + O2 = a flavonol + succinate + CO2 + H2O. It catalyses the reaction a (2S)-flavan-4-one + 2-oxoglutarate + O2 = a (2R,3R)-dihydroflavonol + succinate + CO2. The protein operates within secondary metabolite biosynthesis; flavonoid biosynthesis. In terms of biological role, catalyzes the formation of flavonols from dihydroflavonols. It can act on dihydrokaempferol to produce kaempferol, on dihydroquercetin to produce quercitin and on dihydromyricetin to produce myricetin. This is Flavonol synthase/flavanone 3-hydroxylase (FLS) from Eustoma exaltatum subsp. russellianum (Bluebells).